Here is a 226-residue protein sequence, read N- to C-terminus: ATP synthase subunit C lysine N-methyltransferase (226 aa).

The helical transmembrane segment at 35–55 (VIGGTLVALYAVATPFVAPAL) threads the bilayer. Residues 48-82 (TPFVAPALRKLCLPYVPATTTQVKNVLKMLRSRTG) form a required for mitochondrial location region.

The protein belongs to the ANT/ATPSC lysine N-methyltransferase family.

The protein localises to the mitochondrion membrane. Mitochondrial protein-lysine N-methyltransferase that promotes chronic pain. Involved in persistent inflammatory and neuropathic pain: methyltransferase activity in the mitochondria of sensory neurons promotes chronic pain via a pathway that depends on the production of reactive oxygen species (ROS) and on the engagement of spinal cord microglia. Protein-lysine N-methyltransferase activity is dependent on S-adenosyl-L-methionine. The protein is ATP synthase subunit C lysine N-methyltransferase (atpsckmt) of Xenopus laevis (African clawed frog).